We begin with the raw amino-acid sequence, 181 residues long: Lipoprotein signal peptidase (181 aa).

Helical transmembrane passes span 25 to 45 (LFYKLTMIGFVGFIILLQVFI), 86 to 106 (LVYFLQGLLSVIALVFLVFMV), and 107 to 127 (KYSYIFWITTLAFGSLGNFFD). Catalysis depends on residues aspartate 138 and aspartate 153. Residues 149–169 (FNFADCCITFGFIGLFFCFLI) form a helical membrane-spanning segment.

The protein belongs to the peptidase A8 family.

The protein resides in the cell membrane. The enzyme catalyses Release of signal peptides from bacterial membrane prolipoproteins. Hydrolyzes -Xaa-Yaa-Zaa-|-(S,diacylglyceryl)Cys-, in which Xaa is hydrophobic (preferably Leu), and Yaa (Ala or Ser) and Zaa (Gly or Ala) have small, neutral side chains.. It participates in protein modification; lipoprotein biosynthesis (signal peptide cleavage). In terms of biological role, this protein specifically catalyzes the removal of signal peptides from prolipoproteins. The chain is Lipoprotein signal peptidase from Mycoplasma genitalium (strain ATCC 33530 / DSM 19775 / NCTC 10195 / G37) (Mycoplasmoides genitalium).